The following is a 306-amino-acid chain: Putative HTH-type transcriptional regulatory protein Mhun_2548 (306 aa).

One can recognise an HTH cro/C1-type domain in the interval 132–189 (LRELRETRSLSLGDLGQILGVSRRTVAKYEAGMGTTIEIALRIEETFDSGVIEPIDLI). The H-T-H motif DNA-binding region spans 143–162 (LGDLGQILGVSRRTVAKYEA).

This is Putative HTH-type transcriptional regulatory protein Mhun_2548 from Methanospirillum hungatei JF-1 (strain ATCC 27890 / DSM 864 / NBRC 100397 / JF-1).